We begin with the raw amino-acid sequence, 135 residues long: Small ribosomal subunit protein uS11 (135 aa).

The tract at residues Met-1 to Lys-20 is disordered.

It belongs to the universal ribosomal protein uS11 family. In terms of assembly, part of the 30S ribosomal subunit. Interacts with proteins S7 and S18. Binds to IF-3.

Located on the platform of the 30S subunit, it bridges several disparate RNA helices of the 16S rRNA. Forms part of the Shine-Dalgarno cleft in the 70S ribosome. The chain is Small ribosomal subunit protein uS11 from Rubrobacter xylanophilus (strain DSM 9941 / JCM 11954 / NBRC 16129 / PRD-1).